The chain runs to 115 residues: Ribonuclease P protein component (115 aa).

Belongs to the RnpA family. Consists of a catalytic RNA component (M1 or rnpB) and a protein subunit.

It catalyses the reaction Endonucleolytic cleavage of RNA, removing 5'-extranucleotides from tRNA precursor.. Its function is as follows. RNaseP catalyzes the removal of the 5'-leader sequence from pre-tRNA to produce the mature 5'-terminus. It can also cleave other RNA substrates such as 4.5S RNA. The protein component plays an auxiliary but essential role in vivo by binding to the 5'-leader sequence and broadening the substrate specificity of the ribozyme. This is Ribonuclease P protein component from Blochmanniella pennsylvanica (strain BPEN).